A 200-amino-acid polypeptide reads, in one-letter code: HTH-type transcriptional regulator Hpr (200 aa).

One can recognise an HTH marR-type domain in the interval 13-157; it reads AMLFSQRIAQ…MMCIVRNIYG (145 aa). Residues 63–86 constitute a DNA-binding region (H-T-H motif); the sequence is ISEIAKFGVMHVSTAFNFSKKLEE.

In terms of assembly, homodimer.

In terms of biological role, negative regulator of protease production and sporulation. This is HTH-type transcriptional regulator Hpr from Geobacillus thermodenitrificans (strain NG80-2).